The following is a 937-amino-acid chain: ABC transporter A family member 4 (937 aa).

7 helical membrane-spanning segments follow: residues 34–54, 340–360, 394–414, 423–443, 455–475, 478–498, and 528–548; these read LIVIPFYLCVLLVGIQVLFDT, IASVIGPIFLTWVIVLLFPVI, FLAISTLYIICLMIFGSAIGL, SIQFIFYFLCINLQISIAFLV, VAAYLYVFGSGLLGGFLFQFM, GLSFPRGWIFVMELYPGFSLY, and AMDEVFYIIIIEWFLALIAAY. Residues 618–852 enclose the ABC transporter domain; the sequence is DKLKKVYPGR…YGGSYVLTMT (235 aa). 653–660 is an ATP binding site; it reads GPNGAGKT.

The protein belongs to the ABC transporter superfamily. ABCA family. CPR flippase (TC 3.A.1.211) subfamily.

It localises to the membrane. This is ABC transporter A family member 4 (ABCA4) from Arabidopsis thaliana (Mouse-ear cress).